Reading from the N-terminus, the 451-residue chain is Trigger factor (451 aa).

The 86-residue stretch at 165-250 folds into the PPIase FKBP-type domain; the sequence is DDKLTIDFEG…LHQIQVREAL (86 aa).

Belongs to the FKBP-type PPIase family. Tig subfamily.

It localises to the cytoplasm. The enzyme catalyses [protein]-peptidylproline (omega=180) = [protein]-peptidylproline (omega=0). Functionally, involved in protein export. Acts as a chaperone by maintaining the newly synthesized protein in an open conformation. Functions as a peptidyl-prolyl cis-trans isomerase. The sequence is that of Trigger factor from Helicobacter pylori (strain P12).